We begin with the raw amino-acid sequence, 666 residues long: MIHQKGYQFLQIGLASPKQIRKWAERILPNGDVVGEVKEPHTLHYRNQKPEKDGLFCEKIFGPIKSGRCACGKYERIPEQGEGKKFCKKCWVEFTYSRVRRYRMGYISLGCPVAHVWYLKSTPSHIANLLGQKLKDIESLAYYNHCLGNPSTNYPTLLFIKKYFQYSSLAWLLHILLCFFSFKGFEALEDREIATGGDAIKRLLSELDLQNTIDESRKACEELAYFDPLDEKEAQKAQREKERLVRRIKIASYFQETKIKPQWMVLSTIPVLPPDLRPMIHLNDGPLATSDLNDLYRKVLYRNKTLWELRQGIWPAPHSLMISQKRLVQEAVDALIDNGLGGPPMRDSNNRPYKSLSDVISGKQGRFRQNLLGKRVDYSGRSVIVVGPHLKIYQCGLPKNMAIELFQPFLIHYMINKKLASNLRVAKSIIQSKHPIVWFILKEVIKKHPVLLNRAPTLHRLGIQAFQPILVEGKAILLHPLVCAGFNADFDGDQMAVHVPLSPESQKEARLIMISNRNLLSPATGDPITLPSQDMLLGLYMLTLEDLQRNFSFSQKQCLKKHTNFNQMPSFISFEDVIKARVERKIHLYTSLWLKLKNIEAITSYLYQSPIEIQYNSRGTRSITYEDWNICENIEGEKISIYAYTTVGRVIFNQQFRSALQKRIDY.

The Zn(2+) site is built by Cys-69, Cys-71, Cys-87, and Cys-90. Mg(2+) contacts are provided by Asp-489, Asp-491, and Asp-493.

The protein belongs to the RNA polymerase beta' chain family. RpoC1 subfamily. As to quaternary structure, in plastids the minimal PEP RNA polymerase catalytic core is composed of four subunits: alpha, beta, beta', and beta''. When a (nuclear-encoded) sigma factor is associated with the core the holoenzyme is formed, which can initiate transcription. Mg(2+) is required as a cofactor. It depends on Zn(2+) as a cofactor.

It localises to the plastid. The protein resides in the chloroplast. It carries out the reaction RNA(n) + a ribonucleoside 5'-triphosphate = RNA(n+1) + diphosphate. DNA-dependent RNA polymerase catalyzes the transcription of DNA into RNA using the four ribonucleoside triphosphates as substrates. The protein is DNA-directed RNA polymerase subunit beta' of Chara vulgaris (Common stonewort).